Reading from the N-terminus, the 328-residue chain is Phenylalanine--tRNA ligase alpha subunit (328 aa).

Glu-245 contributes to the Mg(2+) binding site.

This sequence belongs to the class-II aminoacyl-tRNA synthetase family. Phe-tRNA synthetase alpha subunit type 1 subfamily. In terms of assembly, tetramer of two alpha and two beta subunits. Mg(2+) serves as cofactor.

The protein localises to the cytoplasm. It catalyses the reaction tRNA(Phe) + L-phenylalanine + ATP = L-phenylalanyl-tRNA(Phe) + AMP + diphosphate + H(+). This chain is Phenylalanine--tRNA ligase alpha subunit, found in Helicobacter pylori (strain P12).